Consider the following 473-residue polypeptide: MKTLYSLRRSYPVETLFNGTIALAGRDQETTGFAWWAGNARLINLSGKLLGAHVAHAGLIVFWAGAMNLFEVAHFVPEKPMYEQGLILLPHLATLGWGVGPGGEIVDTFPYFVSGVLHLISSAVLGFGGIYHALIGPETLEESFPFFGYVWKDRNKMTTILGIHLILLGVGAFLPVLKALYFGGVYDTWAPGGGDVRKITNPTLNPSAIFGYLLKSPFGGEGWIVSVDNLEDVIGGHVWLGSICIFGGIWHILTKPFAWARRAFVWSGEAYLSYSLAALSLFGFIACCFVWFNNTVYPSEFYGPTGPEASQAQAFTFLVRDQRLGASVGSAQGPTGLGKYLMRSPTGEIIFGGETMRFWDLRAPWLEPLRGPNGLDLSKLRKDIQPWQERRSAEYMTHAPLGSLNSVGGVATEINAVNYVSPRSWLSTSHFVLGFFFFVGHLWHAGRARAAAAGFEKGIDRDFEPVLSMTPLN.

Positions 1–14 (MKTLYSLRRSYPVE) are excised as a propeptide. Thr15 carries the post-translational modification N-acetylthreonine. Thr15 is subject to Phosphothreonine. 5 helical membrane passes run 69–93 (LFEVAHFVPEKPMYEQGLILLPHLA), 134–155 (LIGPETLEESFPFFGYVWKDRN), 178–200 (KALYFGGVYDTWAPGGGDVRKIT), 255–275 (KPFAWARRAFVWSGEAYLSYS), and 291–312 (WFNNTVYPSEFYGPTGPEASQA). Position 367 (Glu367) interacts with [CaMn4O5] cluster. The chain crosses the membrane as a helical span at residues 447-471 (RARAAAAGFEKGIDRDFEPVLSMTP).

This sequence belongs to the PsbB/PsbC family. PsbC subfamily. PSII is composed of 1 copy each of membrane proteins PsbA, PsbB, PsbC, PsbD, PsbE, PsbF, PsbH, PsbI, PsbJ, PsbK, PsbL, PsbM, PsbT, PsbX, PsbY, PsbZ, Psb30/Ycf12, at least 3 peripheral proteins of the oxygen-evolving complex and a large number of cofactors. It forms dimeric complexes. It depends on Binds multiple chlorophylls and provides some of the ligands for the Ca-4Mn-5O cluster of the oxygen-evolving complex. It may also provide a ligand for a Cl- that is required for oxygen evolution. PSII binds additional chlorophylls, carotenoids and specific lipids. as a cofactor.

The protein resides in the plastid. The protein localises to the chloroplast thylakoid membrane. Its function is as follows. One of the components of the core complex of photosystem II (PSII). It binds chlorophyll and helps catalyze the primary light-induced photochemical processes of PSII. PSII is a light-driven water:plastoquinone oxidoreductase, using light energy to abstract electrons from H(2)O, generating O(2) and a proton gradient subsequently used for ATP formation. The protein is Photosystem II CP43 reaction center protein of Pinus thunbergii (Japanese black pine).